The sequence spans 317 residues: Phosphopantothenate--cysteine ligase 1 (317 aa).

This sequence belongs to the PPC synthetase family. As to quaternary structure, homodimer.

It carries out the reaction (R)-4'-phosphopantothenate + L-cysteine + ATP = N-[(R)-4-phosphopantothenoyl]-L-cysteine + AMP + diphosphate + H(+). The protein operates within cofactor biosynthesis; coenzyme A biosynthesis; CoA from (R)-pantothenate: step 2/5. Its function is as follows. Catalyzes the first step in the biosynthesis of coenzyme A from vitamin B5/pantothenate, where cysteine is conjugated to 4'-phosphopantothenate to form 4-phosphopantothenoylcysteine. The catalytic activity is not CTP- but ATP-dependent. This is Phosphopantothenate--cysteine ligase 1 (PPCS1) from Arabidopsis thaliana (Mouse-ear cress).